Here is a 262-residue protein sequence, read N- to C-terminus: tRNA (guanine-N(1)-)-methyltransferase (262 aa).

S-adenosyl-L-methionine is bound by residues G113 and I137–L142.

It belongs to the RNA methyltransferase TrmD family. In terms of assembly, homodimer.

The protein localises to the cytoplasm. It catalyses the reaction guanosine(37) in tRNA + S-adenosyl-L-methionine = N(1)-methylguanosine(37) in tRNA + S-adenosyl-L-homocysteine + H(+). In terms of biological role, specifically methylates guanosine-37 in various tRNAs. The chain is tRNA (guanine-N(1)-)-methyltransferase from Saccharopolyspora erythraea (strain ATCC 11635 / DSM 40517 / JCM 4748 / NBRC 13426 / NCIMB 8594 / NRRL 2338).